The sequence spans 1607 residues: Putative molluscan insulin-related peptide(s) receptor (1607 aa).

The N-terminal stretch at 1-35 (MHPGSISFNMIINKCIPICLFILFIMMMEFTVSKA) is a signal peptide. N-linked (GlcNAc...) asparagine glycans are attached at residues Asn82, Asn188, Asn245, Asn275, Asn332, Asn343, Asn495, Asn520, Asn663, Asn710, Asn778, Asn796, Asn802, Asn868, Asn879, Asn940, and Asn953. Fibronectin type-III domains are found at residues 517 to 632 (HDLN…TYPF), 636 to 726 (EPTD…SKEE), and 756 to 861 (LPDE…TKDS). Residues 698-975 (EKVKIEEEGK…RPPDPESSNT (278 aa)) lie on the Extracellular side of the membrane. The Fibronectin type-III 4 domain occupies 870-967 (TTVDTEIETN…LERFFIVPRP (98 aa)). The chain crosses the membrane as a helical span at residues 976 to 996 (LLIVAIVLAFFGVLTVSLIVA). The Cytoplasmic segment spans residues 997–1607 (CVYYKQKIRS…WSTLKMVLVL (611 aa)). The 272-residue stretch at 1037–1308 (IKLIKELGQG…AIIEYLLPKL (272 aa)) folds into the Protein kinase domain. ATP contacts are provided by residues 1043–1051 (LGQGSFGMV) and Lys1072. The Proton acceptor role is filled by Asp1173. Tyr1199 carries the post-translational modification Phosphotyrosine; by autocatalysis. Disordered regions lie at residues 1328–1352 (GAGE…LSCE) and 1501–1539 (TLNG…SSSW). The segment covering 1503–1515 (NGNQSSHNNNSFE) has biased composition (polar residues). A compositionally biased stretch (low complexity) spans 1524–1538 (SGPASESSNGVSSSS).

The protein belongs to the protein kinase superfamily. Tyr protein kinase family. Insulin receptor subfamily. Probable tetramer of 2 alpha and 2 beta chains linked by disulfide bonds. The alpha chains contribute to the formation of the ligand-binding domain, while the beta chains carry the kinase domain. It depends on Mn(2+) as a cofactor.

It localises to the membrane. The enzyme catalyses L-tyrosyl-[protein] + ATP = O-phospho-L-tyrosyl-[protein] + ADP + H(+). Its function is as follows. This receptor probably binds to the four different molluscan insulin-related peptides and has a tyrosine-protein kinase activity. The sequence is that of Putative molluscan insulin-related peptide(s) receptor from Lymnaea stagnalis (Great pond snail).